A 243-amino-acid chain; its full sequence is MSLFRIFINQLEEDDEDMATSKKMITREEWEKKLNAVKLRKEDMNTLVMNFLVTEGYVEAAEKFQRESGTKPEIDLATITDRMAVKKAVQNGNVEDAIEKVNDLNPEILDTNPELFFHLQQQRLIELIRQGKTEEALEFAQEELAPRGEENQAFLEELEKTVALLVFDDASTCPVKELLDLSHRLKTASEVNAAILTSQSHEKDPKLPSLLKMLIWAQTQLDEKAVYPHINDLSTGKLEDPSE.

A LisH domain is found at 40–72 (RKEDMNTLVMNFLVTEGYVEAAEKFQRESGTKP). The CTLH domain maps to 78–135 (TITDRMAVKKAVQNGNVEDAIEKVNDLNPEILDTNPELFFHLQQQRLIELIRQGKTEE).

This sequence belongs to the GID8 family. Interacts with RANBPM.

The protein resides in the cytoplasm. The protein is Protein GID8 homolog of Arabidopsis thaliana (Mouse-ear cress).